The sequence spans 254 residues: 7-cyano-7-deazaguanine synthase (254 aa).

30-40 lines the ATP pocket; that stretch reads YSGGQDSATCL. 4 residues coordinate Zn(2+): cysteine 218, cysteine 233, cysteine 236, and cysteine 239.

It belongs to the QueC family. Zn(2+) is required as a cofactor.

The catalysed reaction is 7-carboxy-7-deazaguanine + NH4(+) + ATP = 7-cyano-7-deazaguanine + ADP + phosphate + H2O + H(+). It functions in the pathway purine metabolism; 7-cyano-7-deazaguanine biosynthesis. Functionally, catalyzes the ATP-dependent conversion of 7-carboxy-7-deazaguanine (CDG) to 7-cyano-7-deazaguanine (preQ(0)). The sequence is that of 7-cyano-7-deazaguanine synthase from Zymomonas mobilis subsp. mobilis (strain ATCC 31821 / ZM4 / CP4).